Here is a 1147-residue protein sequence, read N- to C-terminus: Nitric oxide synthase, inducible (1147 aa).

The segment at 22 to 51 is disordered; that stretch reads KDINNNVEKTPGAIPSPTTQDDPKSHKHQN. A DINNN-motif; mediates interaction with SPSB1, SPSB2 and SPSB4 motif is present at residues 23–27; the sequence is DINNN. Zn(2+) contacts are provided by Cys107 and Cys112. Ser115 serves as a coordination point for (6R)-L-erythro-5,6,7,8-tetrahydrobiopterin. Heme b is bound at residue Cys197. L-arginine is bound by residues Gln260, Trp369, Tyr370, and Glu374. Residues Arg378, Ile459, Trp460, and Phe473 each coordinate (6R)-L-erythro-5,6,7,8-tetrahydrobiopterin. Tyr488 is a heme b binding site. Residues 512-532 form a calmodulin-binding region; it reads FTVLVKAVFFASVLMRKVMAS. Residues 536–674 form the Flavodoxin-like domain; sequence ATVLFATETG…AFRSWAVQTF (139 aa). Residues Thr542, Glu543, Thr544, Lys546, and Ser547 each contribute to the FMN site. Position 564 is a phosphothreonine (Thr564). Tyr572 carries the phosphotyrosine modification. FMN-binding residues include Ser588, Thr589, Ser625, Cys632, Glu658, and Gln662. Positions 727-967 constitute an FAD-binding FR-type domain; sequence KNVFTMRLKS…VRSVSGFQLP (241 aa). Residue Arg747 coordinates NADP(+). Residues His769, Arg903, Tyr905, Ser906, Thr921, and Ala923 each coordinate FAD. Position 926 (Thr926) interacts with NADP(+). Residues Tyr927, Val940, Cys941, and Ser942 each coordinate FAD. NADP(+) is bound by residues Thr981, Arg1014, Ser1043, Arg1044, Lys1050, Tyr1052, Gln1054, and Asp1087.

This sequence belongs to the NOS family. In terms of assembly, homodimer. Interacts with NHERF1. Interacts with GAPDH; induced by oxidatively-modified low-densitity lipoprotein (LDL(ox)). Interacts with S100A8 and S100A9 to form the iNOS-S100A8/9 transnitrosylase complex. Interacts with SPSB1, SPSB2 and SPSB4. Interacts with ELOC and CUL5 in the presence of SPSB1 or SPSB2 or SPSB4. Forms a complex with ASL, ASS1 and HSP90AA1; the complex regulates cell-autonomous L-arginine synthesis and citrulline recycling while channeling extracellular L-arginine to nitric oxide synthesis pathway. Heme b is required as a cofactor. The cofactor is FAD. FMN serves as cofactor. Requires (6R)-L-erythro-5,6,7,8-tetrahydrobiopterin as cofactor. Polyubiquitinated; mediated by SPSB1, SPSB2 and SPSB4, leading to proteasomal degradation. In normal kidney, expressed primarily in the medullary thick ascending limb, with minor amounts in the medullary collecting duct and vasa recta bundle.

It localises to the cytoplasm. The protein localises to the cytosol. The catalysed reaction is 2 L-arginine + 3 NADPH + 4 O2 + H(+) = 2 L-citrulline + 2 nitric oxide + 3 NADP(+) + 4 H2O. Not stimulated by calcium/calmodulin. Aspirin inhibits expression and function of this enzyme and effects may be exerted at the level of translational/post-translational modification and directly on the catalytic activity. Produces nitric oxide (NO) which is a messenger molecule with diverse functions throughout the body. In macrophages, NO mediates tumoricidal and bactericidal actions. Also has nitrosylase activity and mediates cysteine S-nitrosylation of cytoplasmic target proteins such PTGS2/COX2. As component of the iNOS-S100A8/9 transnitrosylase complex involved in the selective inflammatory stimulus-dependent S-nitrosylation of GAPDH implicated in regulation of the GAIT complex activity and probably multiple targets including ANXA5, EZR, MSN and VIM. Involved in inflammation, enhances the synthesis of pro-inflammatory mediators such as IL6 and IL8. The protein is Nitric oxide synthase, inducible (Nos2) of Rattus norvegicus (Rat).